We begin with the raw amino-acid sequence, 34 residues long: Photosystem II reaction center protein M (34 aa).

Residues 5–25 form a helical membrane-spanning segment; sequence ILAFIATALFILIPTAFLLIL.

The protein belongs to the PsbM family. PSII is composed of 1 copy each of membrane proteins PsbA, PsbB, PsbC, PsbD, PsbE, PsbF, PsbH, PsbI, PsbJ, PsbK, PsbL, PsbM, PsbT, PsbX, PsbY, PsbZ, Psb30/Ycf12, at least 3 peripheral proteins of the oxygen-evolving complex and a large number of cofactors. It forms dimeric complexes.

It is found in the plastid. It localises to the chloroplast thylakoid membrane. One of the components of the core complex of photosystem II (PSII). PSII is a light-driven water:plastoquinone oxidoreductase that uses light energy to abstract electrons from H(2)O, generating O(2) and a proton gradient subsequently used for ATP formation. It consists of a core antenna complex that captures photons, and an electron transfer chain that converts photonic excitation into a charge separation. This subunit is found at the monomer-monomer interface. The protein is Photosystem II reaction center protein M of Angiopteris evecta (Mule's foot fern).